The chain runs to 252 residues: 2-succinyl-6-hydroxy-2,4-cyclohexadiene-1-carboxylate synthase (252 aa).

This sequence belongs to the AB hydrolase superfamily. MenH family. As to quaternary structure, monomer.

The catalysed reaction is 5-enolpyruvoyl-6-hydroxy-2-succinyl-cyclohex-3-ene-1-carboxylate = (1R,6R)-6-hydroxy-2-succinyl-cyclohexa-2,4-diene-1-carboxylate + pyruvate. Its pathway is quinol/quinone metabolism; 1,4-dihydroxy-2-naphthoate biosynthesis; 1,4-dihydroxy-2-naphthoate from chorismate: step 3/7. The protein operates within quinol/quinone metabolism; menaquinone biosynthesis. Its function is as follows. Catalyzes a proton abstraction reaction that results in 2,5-elimination of pyruvate from 2-succinyl-5-enolpyruvyl-6-hydroxy-3-cyclohexene-1-carboxylate (SEPHCHC) and the formation of 2-succinyl-6-hydroxy-2,4-cyclohexadiene-1-carboxylate (SHCHC). The chain is 2-succinyl-6-hydroxy-2,4-cyclohexadiene-1-carboxylate synthase from Shigella dysenteriae serotype 1 (strain Sd197).